Reading from the N-terminus, the 129-residue chain is Venom CUB domain-containing protein 1 (129 aa).

An N-terminal signal peptide occupies residues 1-18; that stretch reads MKLLGVLITIYCIASTLA. The CUB domain occupies 19–121; sequence IDVNVPSNGM…KASCKAYSIT (103 aa). C66 and C83 are oxidised to a cystine.

This sequence belongs to the venom CUB family. In terms of processing, contains 2 disulfide bonds. As to expression, expressed by the venom gland.

Its subcellular location is the secreted. In Platymeris rhadamanthus (Red spot assassin bug), this protein is Venom CUB domain-containing protein 1.